The chain runs to 274 residues: Shikimate dehydrogenase (NADP(+)) (274 aa).

Shikimate contacts are provided by residues 15–17 (SKS) and Thr-62. Lys-66 functions as the Proton acceptor in the catalytic mechanism. Asp-78 provides a ligand contact to NADP(+). Shikimate-binding residues include Asn-87 and Asp-102. NADP(+)-binding positions include 127–131 (GAGGA) and Met-215. Residue Tyr-217 participates in shikimate binding. Gly-239 lines the NADP(+) pocket.

It belongs to the shikimate dehydrogenase family. In terms of assembly, homodimer.

The enzyme catalyses shikimate + NADP(+) = 3-dehydroshikimate + NADPH + H(+). Its pathway is metabolic intermediate biosynthesis; chorismate biosynthesis; chorismate from D-erythrose 4-phosphate and phosphoenolpyruvate: step 4/7. Functionally, involved in the biosynthesis of the chorismate, which leads to the biosynthesis of aromatic amino acids. Catalyzes the reversible NADPH linked reduction of 3-dehydroshikimate (DHSA) to yield shikimate (SA). This chain is Shikimate dehydrogenase (NADP(+)), found in Dechloromonas aromatica (strain RCB).